The chain runs to 224 residues: Heme response regulator HssR (224 aa).

In terms of domain architecture, Response regulatory spans Q3–L116. D52 carries the post-translational modification 4-aspartylphosphate. Positions N124–N222 form a DNA-binding region, ompR/PhoB-type.

Phosphorylated by HssS.

Its subcellular location is the cytoplasm. Its function is as follows. Member of the two-component regulatory system HssS/HssR involved in intracellular heme homeostasis and tempering of staphylococcal virulence. Phosphorylated HssR binds to a direct repeat sequence within hrtAB promoter and activates the expression of hrtAB, an efflux pump, in response to extracellular heme, hemin, hemoglobin or blood. The polypeptide is Heme response regulator HssR (hssR) (Staphylococcus aureus (strain COL)).